The following is a 1071-amino-acid chain: Exportin-1 (1071 aa).

In terms of domain architecture, Importin N-terminal spans 46–112 (AQEVLTHLKE…KKYVVGLIIK (67 aa)). 6 HEAT repeats span residues 217 to 240 (QNAPLVHATLETLLRFLNWIPLGY), 241 to 277 (IFETKLISTLIYKFLNVPMFRNVSLKCLTEIAGVSVS), 354 to 472 (MLLV…YVDT), 515 to 553 (RFLVTVIKDLLGLCEQKRGKDNKAIIASNIMYIVGQYPR), 560 to 597 (KFLKTVVNKLFEFMHETHDGVQDMACDTFIKIAQKCRR), and 602 to 639 (VQVGEVMPFIDEILNNINTIICDLQPQQVHTFYEAVGY). Residues 327–450 (CTFLKEHGQL…VREFMKDTDS (124 aa)) are necessary for interaction with Ran and nuclear export complex formation. Serine 391 carries the post-translational modification Phosphoserine. Positions 411 to 481 (TVLSKVRLLM…TEIIMTKKLQ (71 aa)) are necessary for interaction with RANBP3. N6-acetyllysine is present on lysine 446. Threonine 448 carries the post-translational modification Phosphothreonine. Serine 450 is modified (phosphoserine). Tyrosine 454 carries the phosphotyrosine modification. The residue at position 693 (lysine 693) is an N6-acetyllysine. HEAT repeat units follow at residues 775 to 813 (NFVPPLLDAVLIDYQRNVPAAREPEVLSTMAIIVNKLGG), 885 to 916 (TMRNVADTGLQILFTLLQNVAQEEAAAQSFYQ), and 917 to 954 (TYFCDILQHIFSVVTDTSHTAGLTMHASILAYMFNLVE). Phosphoserine is present on residues serine 966 and serine 1031. One copy of the HEAT 10 repeat lies at 1002–1039 (FSLNQDIPAFKEHLRDFLVQIKEFAGEDTSDLFLEERE).

This sequence belongs to the exportin family. In terms of assembly, found in a U snRNA export complex with PHAX/RNUXA, NCBP1/CBP80, NCBP2/CBP20, RAN, XPO1 and m7G-capped RNA. Component of a nuclear export receptor complex composed of KPNB1, RAN, SNUPN and XPO1. Found in a trimeric export complex with SNUPN, RAN and XPO1. Found in a nuclear export complex with RANBP3 and RAN. Found in a 60S ribosomal subunit export complex with NMD3, RAN, XPO1. Interacts with DDX3X, NMD3, NUP42, NUP88, NUP214, RANBP3 and TERT. Interacts with NEMF (via its N-terminus). Interacts with the monomeric form of BIRC5/survivin deacetylated at 'Lys-129'. Interacts with DTNBP1 and SERTAD2; the interactions translocate DTNBP1 and SERTAD2 out of the nucleus. Interacts with ATF2. Interacts with SLC35G1 and STIM1. Interacts with DCAF8. Interacts with CPEB3. Interacts with HAX1. Interacts with BOK; translocates to the cytoplasm. Interacts with HSP90AB1. Interacts with LRPPRC; interacts with LRPPRC alone and also when LRPPRC is in complex with EIF4E and with EIF4E sensitivity element (4ESE)-containing mRNAs to form an EIF4E-dependent mRNA export complex.

It is found in the cytoplasm. The protein resides in the nucleus. The protein localises to the nucleoplasm. It localises to the cajal body. Its subcellular location is the nucleolus. In terms of biological role, mediates the nuclear export of cellular proteins (cargos) bearing a leucine-rich nuclear export signal (NES) and of RNAs. In the nucleus, in association with RANBP3, binds cooperatively to the NES on its target protein and to the GTPase Ran in its active GTP-bound form. Docking of this complex to the nuclear pore complex (NPC) is mediated through binding to nucleoporins. Upon transit of a nuclear export complex into the cytoplasm, disassembling of the complex and hydrolysis of Ran-GTP to Ran-GDP (induced by RANBP1 and RANGAP1, respectively) cause release of the cargo from the export receptor. The directionality of nuclear export is thought to be conferred by an asymmetric distribution of the GTP- and GDP-bound forms of Ran between the cytoplasm and nucleus. Involved in U3 snoRNA transport from Cajal bodies to nucleoli. Binds to late precursor U3 snoRNA bearing a TMG cap. This chain is Exportin-1 (Xpo1), found in Rattus norvegicus (Rat).